The following is a 91-amino-acid chain: ATP synthase subunit c (91 aa).

The next 2 membrane-spanning stretches (helical) occupy residues 4 to 24 and 53 to 73; these read FTMC…GTGI and IGLA…LIIL.

The protein belongs to the ATPase C chain family. In terms of assembly, F-type ATPases have 2 components, F(1) - the catalytic core - and F(0) - the membrane proton channel. F(1) has five subunits: alpha(3), beta(3), gamma(1), delta(1), epsilon(1). F(0) has three main subunits: a(1), b(2) and c(10-14). The alpha and beta chains form an alternating ring which encloses part of the gamma chain. F(1) is attached to F(0) by a central stalk formed by the gamma and epsilon chains, while a peripheral stalk is formed by the delta and b chains.

The protein resides in the cell inner membrane. F(1)F(0) ATP synthase produces ATP from ADP in the presence of a proton or sodium gradient. F-type ATPases consist of two structural domains, F(1) containing the extramembraneous catalytic core and F(0) containing the membrane proton channel, linked together by a central stalk and a peripheral stalk. During catalysis, ATP synthesis in the catalytic domain of F(1) is coupled via a rotary mechanism of the central stalk subunits to proton translocation. Functionally, key component of the F(0) channel; it plays a direct role in translocation across the membrane. A homomeric c-ring of between 10-14 subunits forms the central stalk rotor element with the F(1) delta and epsilon subunits. In Geotalea uraniireducens (strain Rf4) (Geobacter uraniireducens), this protein is ATP synthase subunit c.